The following is a 27-amino-acid chain: Omega-conotoxin RVIA (27 aa).

3 cysteine pairs are disulfide-bonded: C1–C16, C8–C19, and C15–C26. 4-hydroxyproline is present on residues P4 and P7.

It belongs to the conotoxin O1 superfamily. As to expression, expressed by the venom duct.

It is found in the secreted. Functionally, omega-conotoxins act at presynaptic membranes, they bind and block voltage-gated calcium channels (Cav). This chain is Omega-conotoxin RVIA, found in Conus radiatus (Rayed cone).